Here is a 141-residue protein sequence, read N- to C-terminus: Nucleoside diphosphate kinase (141 aa).

ATP contacts are provided by lysine 11, phenylalanine 59, arginine 87, threonine 93, arginine 104, and asparagine 114. The Pros-phosphohistidine intermediate role is filled by histidine 117.

Belongs to the NDK family. Homotetramer. Mg(2+) is required as a cofactor.

It localises to the cytoplasm. It catalyses the reaction a 2'-deoxyribonucleoside 5'-diphosphate + ATP = a 2'-deoxyribonucleoside 5'-triphosphate + ADP. The catalysed reaction is a ribonucleoside 5'-diphosphate + ATP = a ribonucleoside 5'-triphosphate + ADP. Functionally, major role in the synthesis of nucleoside triphosphates other than ATP. The ATP gamma phosphate is transferred to the NDP beta phosphate via a ping-pong mechanism, using a phosphorylated active-site intermediate. This Serratia proteamaculans (strain 568) protein is Nucleoside diphosphate kinase.